The chain runs to 565 residues: Oxygen-dependent choline dehydrogenase (565 aa).

Residue Asp-7–Glu-36 participates in FAD binding. Residue His-474 is the Proton acceptor of the active site.

Belongs to the GMC oxidoreductase family. The cofactor is FAD.

The enzyme catalyses choline + A = betaine aldehyde + AH2. The catalysed reaction is betaine aldehyde + NAD(+) + H2O = glycine betaine + NADH + 2 H(+). It participates in amine and polyamine biosynthesis; betaine biosynthesis via choline pathway; betaine aldehyde from choline (cytochrome c reductase route): step 1/1. Functionally, involved in the biosynthesis of the osmoprotectant glycine betaine. Catalyzes the oxidation of choline to betaine aldehyde and betaine aldehyde to glycine betaine at the same rate. This Burkholderia mallei (strain ATCC 23344) protein is Oxygen-dependent choline dehydrogenase.